The following is a 522-amino-acid chain: Protein GDS1 (522 aa).

Disordered regions lie at residues 56–88, 222–268, 300–391, and 433–489; these read ALDD…PKKD, QQLE…SSNS, LSPS…SHNA, and STQT…SRNE. Residues 62-73 are compositionally biased toward polar residues; that stretch reads LAGSSFSSSQEI. Residues 74–88 show a composition bias toward basic and acidic residues; it reads KATKPKKDFGAPKKD. Polar residues-rich tracts occupy residues 222–236, 244–260, 300–314, and 355–366; these read QQLE…FNSN, SSNQ…SMTD, LSPS…LLTP, and SQSLSVLSTPKK. Low complexity predominate over residues 368–378; that stretch reads SSASLSTFASS. Over residues 379–391 the composition is skewed to polar residues; sequence KNISPDSSLSHNA. The span at 439-467 shows a compositional bias: low complexity; the sequence is ESSSESSQYNSSSSSPVNSAAASSAESLS. Positions 468–489 are enriched in polar residues; sequence DINSSQDNGRESNPSSQESRNE.

Involved in nuclear control of mitochondria. The polypeptide is Protein GDS1 (GDS1) (Saccharomyces cerevisiae (strain ATCC 204508 / S288c) (Baker's yeast)).